Reading from the N-terminus, the 210-residue chain is Redox-sensing transcriptional repressor Rex (210 aa).

The H-T-H motif DNA-binding region spans 17–56 (KYHRYLGDLLDRDIQRISSKELSDIIGFTASQIRQDLNNF). 91 to 96 (GAGNLG) serves as a coordination point for NAD(+).

This sequence belongs to the transcriptional regulatory Rex family. As to quaternary structure, homodimer.

It is found in the cytoplasm. Functionally, modulates transcription in response to changes in cellular NADH/NAD(+) redox state. The protein is Redox-sensing transcriptional repressor Rex of Clostridioides difficile (strain 630) (Peptoclostridium difficile).